Here is a 307-residue protein sequence, read N- to C-terminus: 4-hydroxy-3-methylbut-2-enyl diphosphate reductase (307 aa).

A [4Fe-4S] cluster-binding site is contributed by cysteine 13. The (2E)-4-hydroxy-3-methylbut-2-enyl diphosphate site is built by histidine 42 and histidine 75. Dimethylallyl diphosphate is bound by residues histidine 42 and histidine 75. Isopentenyl diphosphate is bound by residues histidine 42 and histidine 75. Residue cysteine 97 coordinates [4Fe-4S] cluster. Histidine 125 provides a ligand contact to (2E)-4-hydroxy-3-methylbut-2-enyl diphosphate. Histidine 125 contacts dimethylallyl diphosphate. Residue histidine 125 participates in isopentenyl diphosphate binding. The Proton donor role is filled by glutamate 127. Threonine 165 contributes to the (2E)-4-hydroxy-3-methylbut-2-enyl diphosphate binding site. Residue cysteine 195 participates in [4Fe-4S] cluster binding. 4 residues coordinate (2E)-4-hydroxy-3-methylbut-2-enyl diphosphate: serine 223, serine 224, asparagine 225, and serine 267. Dimethylallyl diphosphate is bound by residues serine 223, serine 224, asparagine 225, and serine 267. The isopentenyl diphosphate site is built by serine 223, serine 224, asparagine 225, and serine 267.

This sequence belongs to the IspH family. [4Fe-4S] cluster is required as a cofactor.

It catalyses the reaction isopentenyl diphosphate + 2 oxidized [2Fe-2S]-[ferredoxin] + H2O = (2E)-4-hydroxy-3-methylbut-2-enyl diphosphate + 2 reduced [2Fe-2S]-[ferredoxin] + 2 H(+). It carries out the reaction dimethylallyl diphosphate + 2 oxidized [2Fe-2S]-[ferredoxin] + H2O = (2E)-4-hydroxy-3-methylbut-2-enyl diphosphate + 2 reduced [2Fe-2S]-[ferredoxin] + 2 H(+). Its pathway is isoprenoid biosynthesis; dimethylallyl diphosphate biosynthesis; dimethylallyl diphosphate from (2E)-4-hydroxy-3-methylbutenyl diphosphate: step 1/1. The protein operates within isoprenoid biosynthesis; isopentenyl diphosphate biosynthesis via DXP pathway; isopentenyl diphosphate from 1-deoxy-D-xylulose 5-phosphate: step 6/6. Its function is as follows. Catalyzes the conversion of 1-hydroxy-2-methyl-2-(E)-butenyl 4-diphosphate (HMBPP) into a mixture of isopentenyl diphosphate (IPP) and dimethylallyl diphosphate (DMAPP). Acts in the terminal step of the DOXP/MEP pathway for isoprenoid precursor biosynthesis. The polypeptide is 4-hydroxy-3-methylbut-2-enyl diphosphate reductase (Chlamydia trachomatis serovar D (strain ATCC VR-885 / DSM 19411 / UW-3/Cx)).